Here is a 405-residue protein sequence, read N- to C-terminus: Cytoplasmic tRNA 2-thiolation protein 2 (405 aa).

It belongs to the CTU2/NCS2 family.

The protein localises to the cytoplasm. The protein operates within tRNA modification; 5-methoxycarbonylmethyl-2-thiouridine-tRNA biosynthesis. In terms of biological role, plays a central role in 2-thiolation of mcm(5)S(2)U at tRNA wobble positions of tRNA(Lys), tRNA(Glu) and tRNA(Gln). May act by forming a heterodimer with NCS6/CTU1 that ligates sulfur from thiocarboxylated URM1 onto the uridine of tRNAs at wobble position. This Drosophila simulans (Fruit fly) protein is Cytoplasmic tRNA 2-thiolation protein 2.